Here is a 381-residue protein sequence, read N- to C-terminus: Phthiodiolone/phenolphthiodiolone dimycocerosates ketoreductase (381 aa).

This sequence belongs to the mer family. Phthiodiolone/phenolphthiodiolone dimycocerosates ketoreductase subfamily.

Functionally, catalyzes the reduction of the keto moiety of phthiodiolone dimycocerosates (DIM B) and glycosylated phenolphthiodiolone dimycocerosates to form the intermediate compounds phthiotriol and glycosylated phenolphthiotriol dimycocerosates during phthiocerol dimycocerosates (DIM A) and glycosylated phenolphthiocerol dimycocerosates (PGL) biosynthesis. The chain is Phthiodiolone/phenolphthiodiolone dimycocerosates ketoreductase from Mycobacterium bovis (strain ATCC BAA-935 / AF2122/97).